Consider the following 149-residue polypeptide: Large ribosomal subunit protein uL22c (149 aa).

The protein belongs to the universal ribosomal protein uL22 family. In terms of assembly, part of the 50S ribosomal subunit.

It is found in the plastid. It localises to the chloroplast. In terms of biological role, this protein binds specifically to 23S rRNA. The globular domain of the protein is located near the polypeptide exit tunnel on the outside of the subunit, while an extended beta-hairpin is found that lines the wall of the exit tunnel in the center of the 70S ribosome. This Pelargonium hortorum (Common geranium) protein is Large ribosomal subunit protein uL22c (rpl22-A).